Reading from the N-terminus, the 432-residue chain is Glutamyl-tRNA reductase (432 aa).

Substrate is bound by residues 49–52, S107, 112–114, and Q118; these read TCNR and ETQ. The active-site Nucleophile is C50. 186-191 is an NADP(+) binding site; the sequence is GAGEMG.

The protein belongs to the glutamyl-tRNA reductase family. As to quaternary structure, homodimer.

It carries out the reaction (S)-4-amino-5-oxopentanoate + tRNA(Glu) + NADP(+) = L-glutamyl-tRNA(Glu) + NADPH + H(+). It functions in the pathway porphyrin-containing compound metabolism; protoporphyrin-IX biosynthesis; 5-aminolevulinate from L-glutamyl-tRNA(Glu): step 1/2. In terms of biological role, catalyzes the NADPH-dependent reduction of glutamyl-tRNA(Glu) to glutamate 1-semialdehyde (GSA). The sequence is that of Glutamyl-tRNA reductase from Campylobacter jejuni subsp. jejuni serotype O:23/36 (strain 81-176).